Consider the following 430-residue polypeptide: Glutamate-1-semialdehyde 2,1-aminomutase (430 aa).

Lys265 carries the post-translational modification N6-(pyridoxal phosphate)lysine.

The protein belongs to the class-III pyridoxal-phosphate-dependent aminotransferase family. HemL subfamily. In terms of assembly, homodimer. The cofactor is pyridoxal 5'-phosphate.

The protein resides in the cytoplasm. It carries out the reaction (S)-4-amino-5-oxopentanoate = 5-aminolevulinate. It functions in the pathway porphyrin-containing compound metabolism; protoporphyrin-IX biosynthesis; 5-aminolevulinate from L-glutamyl-tRNA(Glu): step 2/2. The polypeptide is Glutamate-1-semialdehyde 2,1-aminomutase (hemL) (Helicobacter pylori (strain J99 / ATCC 700824) (Campylobacter pylori J99)).